The chain runs to 161 residues: 3-isopropylmalate dehydratase small subunit 1 (161 aa).

This sequence belongs to the LeuD family. LeuD type 2 subfamily. As to quaternary structure, heterodimer of LeuC and LeuD.

The catalysed reaction is (2R,3S)-3-isopropylmalate = (2S)-2-isopropylmalate. It functions in the pathway amino-acid biosynthesis; L-leucine biosynthesis; L-leucine from 3-methyl-2-oxobutanoate: step 2/4. Its function is as follows. Catalyzes the isomerization between 2-isopropylmalate and 3-isopropylmalate, via the formation of 2-isopropylmaleate. This chain is 3-isopropylmalate dehydratase small subunit 1 (leuD1), found in Archaeoglobus fulgidus (strain ATCC 49558 / DSM 4304 / JCM 9628 / NBRC 100126 / VC-16).